Reading from the N-terminus, the 308-residue chain is Acetaldehyde dehydrogenase (308 aa).

Position 25-28 (25-28) interacts with NAD(+); that stretch reads TGAI. C139 functions as the Acyl-thioester intermediate in the catalytic mechanism. N279 is an NAD(+) binding site.

Belongs to the acetaldehyde dehydrogenase family.

It catalyses the reaction acetaldehyde + NAD(+) + CoA = acetyl-CoA + NADH + H(+). The protein is Acetaldehyde dehydrogenase of Streptomyces griseus subsp. griseus (strain JCM 4626 / CBS 651.72 / NBRC 13350 / KCC S-0626 / ISP 5235).